The primary structure comprises 301 residues: Putative MgpC-like protein MPN_093 (301 aa).

The protein belongs to the MgpC family.

This is Putative MgpC-like protein MPN_093 from Mycoplasma pneumoniae (strain ATCC 29342 / M129 / Subtype 1) (Mycoplasmoides pneumoniae).